A 621-amino-acid chain; its full sequence is Chaperone protein HtpG (621 aa).

Residues 1-328 (MKQEKKKFDA…SEDLPLNISR (328 aa)) form an a; substrate-binding region. Positions 329–544 (ESLQHNNVLE…EAAMDIRMER (216 aa)) are b. The disordered stretch occupies residues 479 to 498 (VDQATSSSEEKNKDDKKSDD). A compositionally biased stretch (basic and acidic residues) spans 486–498 (SEEKNKDDKKSDD). The tract at residues 545–621 (FLIEQKQIAN…LNDIVQKAIL (77 aa)) is c.

The protein belongs to the heat shock protein 90 family. In terms of assembly, homodimer.

It localises to the cytoplasm. In terms of biological role, molecular chaperone. Has ATPase activity. The chain is Chaperone protein HtpG from Rickettsia bellii (strain OSU 85-389).